The following is a 397-amino-acid chain: ATP-dependent RNA helicase eIF4A (397 aa).

Residues 24–52 carry the Q motif motif; sequence DSFDEMNLKPELLRGIYAYGFERPSAIQQ. The Helicase ATP-binding domain occupies 55–225; that stretch reads IMPVIKGHDV…TKFMREPVRI (171 aa). 68–75 contributes to the ATP binding site; the sequence is AQSGTGKT. A DEAD box motif is present at residues 173–176; sequence DEAD. The region spanning 236 to 397 is the Helicase C-terminal domain; sequence GIKQFYIAVE…EMPMNVADLI (162 aa).

Belongs to the DEAD box helicase family. eIF4A subfamily. As to quaternary structure, component of the eIF4F complex, which composition varies with external and internal environmental conditions. It is composed of at least eIF4A, eIF4E and eIF4G.

Its subcellular location is the cytoplasm. The catalysed reaction is ATP + H2O = ADP + phosphate + H(+). ATP-dependent RNA helicase which is a subunit of the eIF4F complex involved in cap recognition and is required for mRNA binding to ribosome. In the current model of translation initiation, eIF4A unwinds RNA secondary structures in the 5'-UTR of mRNAs which is necessary to allow efficient binding of the small ribosomal subunit, and subsequent scanning for the initiator codon. The chain is ATP-dependent RNA helicase eIF4A (tif-1) from Neurospora crassa (strain ATCC 24698 / 74-OR23-1A / CBS 708.71 / DSM 1257 / FGSC 987).